The primary structure comprises 66 residues: Ribosome biogenesis protein Nop10 (66 aa).

The protein belongs to the NOP10 family.

Functionally, involved in ribosome biogenesis; more specifically in 18S rRNA pseudouridylation and in cleavage of pre-rRNA. The chain is Ribosome biogenesis protein Nop10 from Staphylothermus marinus (strain ATCC 43588 / DSM 3639 / JCM 9404 / F1).